The chain runs to 316 residues: Porphobilinogen deaminase (316 aa).

Position 249 is an S-(dipyrrolylmethanemethyl)cysteine (C249).

The protein belongs to the HMBS family. As to quaternary structure, monomer. Dipyrromethane serves as cofactor.

It catalyses the reaction 4 porphobilinogen + H2O = hydroxymethylbilane + 4 NH4(+). It participates in porphyrin-containing compound metabolism; protoporphyrin-IX biosynthesis; coproporphyrinogen-III from 5-aminolevulinate: step 2/4. Functionally, tetrapolymerization of the monopyrrole PBG into the hydroxymethylbilane pre-uroporphyrinogen in several discrete steps. This is Porphobilinogen deaminase from Nitrobacter winogradskyi (strain ATCC 25391 / DSM 10237 / CIP 104748 / NCIMB 11846 / Nb-255).